We begin with the raw amino-acid sequence, 58 residues long: Large ribosomal subunit protein uL30 (58 aa).

This sequence belongs to the universal ribosomal protein uL30 family. Part of the 50S ribosomal subunit.

The protein is Large ribosomal subunit protein uL30 of Acinetobacter baylyi (strain ATCC 33305 / BD413 / ADP1).